The chain runs to 85 residues: UPF0386 protein TM1040_0419 (85 aa).

Residues 62 to 85 (SKSSRPYQISEKGRRSVRAQLDNR) are disordered.

The protein belongs to the UPF0386 family.

The chain is UPF0386 protein TM1040_0419 from Ruegeria sp. (strain TM1040) (Silicibacter sp.).